Here is a 188-residue protein sequence, read N- to C-terminus: Accessory gene regulator protein B (188 aa).

4 helical membrane passes run 49-69, 82-102, 104-124, and 163-183; these read VALL…YFFV, LLCH…IVHF, VSWT…ICYA, and YMQL…PIFF.

It belongs to the AgrB family.

It is found in the cell membrane. Functionally, essential for the production of a quorum sensing system signal molecule, the autoinducing peptide (AIP). This quorum sensing system is responsible for the regulation of the expression of virulence factor genes. Involved in the proteolytic processing of AgrD, the precursor of AIP. This chain is Accessory gene regulator protein B, found in Staphylococcus lugdunensis.